We begin with the raw amino-acid sequence, 288 residues long: Purine nucleoside phosphorylase (288 aa).

Phosphate is bound at residue 65–66 (RN). Methionine 201 provides a ligand contact to substrate. Threonine 202 provides a ligand contact to phosphate.

This sequence belongs to the PNP/MTAP phosphorylase family. MTAP subfamily. Homotrimer.

Its subcellular location is the cytoplasm. It is found in the nucleus. It carries out the reaction a purine D-ribonucleoside + phosphate = a purine nucleobase + alpha-D-ribose 1-phosphate. It functions in the pathway purine metabolism; purine nucleoside salvage. Purine nucleoside phosphorylase involved in purine salvage. The sequence is that of Purine nucleoside phosphorylase from Drosophila pseudoobscura pseudoobscura (Fruit fly).